Here is a 242-residue protein sequence, read N- to C-terminus: DNA-directed RNA polymerase III subunit rpc5 (242 aa).

Disordered regions lie at residues 1-22 (MSFSEDQAMEEAKLRNDETEEQ) and 153-172 (LKAAAGPSNSSSGTSTPRGP). Low complexity predominate over residues 155–172 (AAAGPSNSSSGTSTPRGP).

As to quaternary structure, component of the RNA polymerase III (Pol III) complex consisting of 17 subunits.

The protein localises to the cytoplasm. It localises to the nucleus. In terms of biological role, DNA-dependent RNA polymerase catalyzes the transcription of DNA into RNA using the four ribonucleoside triphosphates as substrates. Specific peripheric component of RNA polymerase III which synthesizes small RNAs, such as 5S rRNA and tRNAs. The RPC53/RPC4-RPC37/RPC5 subcomplex is required for terminator recognition and reinitiation. The protein is DNA-directed RNA polymerase III subunit rpc5 (rpc37) of Schizosaccharomyces pombe (strain 972 / ATCC 24843) (Fission yeast).